We begin with the raw amino-acid sequence, 299 residues long: Probable endonuclease 4 (299 aa).

Zn(2+) contacts are provided by His68, His110, Glu145, Asp179, His182, His214, Asp227, His229, and Glu259.

This sequence belongs to the AP endonuclease 2 family. Zn(2+) is required as a cofactor.

The catalysed reaction is Endonucleolytic cleavage to 5'-phosphooligonucleotide end-products.. Functionally, endonuclease IV plays a role in DNA repair. It cleaves phosphodiester bonds at apurinic or apyrimidinic (AP) sites, generating a 3'-hydroxyl group and a 5'-terminal sugar phosphate. This chain is Probable endonuclease 4, found in Exiguobacterium sibiricum (strain DSM 17290 / CCUG 55495 / CIP 109462 / JCM 13490 / 255-15).